The sequence spans 223 residues: UPF0441 protein YgiB (223 aa).

Low complexity predominate over residues threonine 178–threonine 195. Residues threonine 178–glycine 223 form a disordered region. Residues alanine 204–glycine 223 are compositionally biased toward polar residues.

This sequence belongs to the UPF0441 family.

The chain is UPF0441 protein YgiB from Escherichia coli (strain ATCC 8739 / DSM 1576 / NBRC 3972 / NCIMB 8545 / WDCM 00012 / Crooks).